Here is a 494-residue protein sequence, read N- to C-terminus: Cobyric acid synthase (494 aa).

Positions 254-453 constitute a GATase cobBQ-type domain; that stretch reads KQTVAVIAYP…LHGLFEDPGA (200 aa). Cys338 (nucleophile) is an active-site residue. His445 is an active-site residue.

It belongs to the CobB/CobQ family. CobQ subfamily.

It functions in the pathway cofactor biosynthesis; adenosylcobalamin biosynthesis. Its function is as follows. Catalyzes amidations at positions B, D, E, and G on adenosylcobyrinic A,C-diamide. NH(2) groups are provided by glutamine, and one molecule of ATP is hydrogenolyzed for each amidation. The sequence is that of Cobyric acid synthase from Albidiferax ferrireducens (strain ATCC BAA-621 / DSM 15236 / T118) (Rhodoferax ferrireducens).